The chain runs to 165 residues: Glucosamine 6-phosphate N-acetyltransferase 1 (165 aa).

Residues 22 to 165 enclose the N-acetyltransferase domain; the sequence is YRIRPLELAD…EKNVQMGLYF (144 aa). Substrate-binding positions include Ser-44, 92-95, and 104-106; these read KFIR and EDV. 114–119 lines the acetyl-CoA pocket; that stretch reads GRGLGE. Position 135-136 (135-136) interacts with substrate; that stretch reads YK. 149–151 contributes to the acetyl-CoA binding site; sequence YAK.

The protein belongs to the acetyltransferase family. GNA1 subfamily. Homodimer. In terms of tissue distribution, highly expressed in the root elongation zone and at lower levels in leaves and grains.

The protein localises to the endoplasmic reticulum membrane. It catalyses the reaction D-glucosamine 6-phosphate + acetyl-CoA = N-acetyl-D-glucosamine 6-phosphate + CoA + H(+). The protein operates within nucleotide-sugar biosynthesis; UDP-N-acetyl-alpha-D-glucosamine biosynthesis; N-acetyl-alpha-D-glucosamine 1-phosphate from alpha-D-glucosamine 6-phosphate (route I): step 1/2. In terms of biological role, acetyltransferase involved in de novo biosynthesis of UDP-N-acetylglucosamine (UDP-GlcNAc) in roots and is required for maintaining normal root cell shape. UDP-GlcNAc is an essential metabolite that serves as an initial sugar donor for N-glycan synthesis and thus plays an important role in protein and lipid glycosylation. In Oryza sativa subsp. japonica (Rice), this protein is Glucosamine 6-phosphate N-acetyltransferase 1 (GNA1).